Reading from the N-terminus, the 66-residue chain is Large ribosomal subunit protein bL33c (66 aa).

Belongs to the bacterial ribosomal protein bL33 family.

It is found in the plastid. It localises to the chloroplast. The polypeptide is Large ribosomal subunit protein bL33c (Citrus sinensis (Sweet orange)).